The sequence spans 482 residues: MASRTTPSRSTPSRSTPSGSSSGGRTRVGKYELGRTLGEGTFAKVKFARNVENGDNVAIKVIDKEKVLKNKMIAQIKREISTMKLIKHPNVIRMFEVMASKTKIYFVLEFVTGGELFDKISSNGRLKEDEARKYFQQLINAVDYCHSRGVYHRDLKPENLLLDANGALKVSDFGLSALPQQVREDGLLHTTCGTPNYVAPEVINNKGYDGAKADLWSCGVILFVLMAGYLPFEDSNLTSLYKKIFKAEFTCPPWFSASAKKLIKRILDPNPATRITFAEVIENEWFKKGYKAPKFENADVSLDDVDAIFDDSGESKNLVVERREEGLKTPVTMNAFELISTSQGLNLGSLFEKQMGLVKRKTRFTSKSSANEIVTKIEAAAAPMGFDVKTNNYKMKLTGEKSGRKGQLAVATEVFQVAPSLYMVEMRKSGGDTLEFHKFYKNLTTGLKDIVWKTIDEEKEEGTDGGGTNGAMANRTIAKQST.

Low complexity predominate over residues 1–25 (MASRTTPSRSTPSRSTPSGSSSGGR). A disordered region spans residues 1 to 29 (MASRTTPSRSTPSRSTPSGSSSGGRTRVG). The region spanning 31–286 (YELGRTLGEG…FAEVIENEWF (256 aa)) is the Protein kinase domain. ATP contacts are provided by residues 37–45 (LGEGTFAKV) and Lys60. Asp154 functions as the Proton acceptor in the catalytic mechanism. The interval 172–201 (DFGLSALPQQVREDGLLHTTCGTPNYVAPE) is activation loop. Residue Ser176 is modified to Phosphoserine. Residue Thr190 is modified to Phosphothreonine. Residues 328-352 (KTPVTMNAFELISTSQGLNLGSLFE) form the NAF domain. The segment at 359 to 388 (KRKTRFTSKSSANEIVTKIEAAAAPMGFDV) is PPI. Residues 459 to 482 (KEEGTDGGGTNGAMANRTIAKQST) form a disordered region.

Belongs to the protein kinase superfamily. CAMK Ser/Thr protein kinase family. SNF1 subfamily. Part of a K(+)-channel calcium-sensing kinase/phosphatase complex composed by a calcium sensor CBL (CBL1, CBL2, CBL3 or CBL9), a kinase CIPK (CIPK6, CIPK16 or CIPK23), a phosphatase PP2C (AIP1) and a K(+)-channel (AKT1). Interacts with AKT1, CBL1, CBL2, CBL3, CBL5, CBL8, CBL9 and NRT1.1. Requires Mn(2+) as cofactor. In terms of processing, autophosphorylated. As to expression, in seedlings, mostly in vascular bundles, and in roots, especially in cortex and endodermis cells. In adult plants, mostly expressed in flowers, and, to a lower extent, in roots, leaves, stems and siliques, particularly in vascular tissues. Also detected in guard cells and root hairs.

Its subcellular location is the cell membrane. It carries out the reaction L-seryl-[protein] + ATP = O-phospho-L-seryl-[protein] + ADP + H(+). The enzyme catalyses L-threonyl-[protein] + ATP = O-phospho-L-threonyl-[protein] + ADP + H(+). In terms of biological role, CIPK serine-threonine protein kinases interact with CBL proteins. Binding of a CBL protein to the regulatory NAF domain of CIPK protein leads to activation of the kinase in a calcium-dependent manner. Downstream of CBL1, CBL2, CBL3 and CBL9, regulates by phosphorylation the K(+) conductance and uptake of AKT1 in low K(+) condition, in response to calcium signaling and during the stomatal opening regulation by monitoring the turgor pressure in guard cells. In response to low nitrate concentration, phosphorylates NRT1.1, switching it from a low-affinity nitrate transporter to a high-affinity transporter. Confers tolerance to low potassium conditions. Involved in drought sensitivity and leaf transpiration. The protein is CBL-interacting serine/threonine-protein kinase 23 (CIPK23) of Arabidopsis thaliana (Mouse-ear cress).